Consider the following 85-residue polypeptide: MEAREVEEMRRSRLLTLGGIGYTAVIALAALVLVMGALGLVLKVAAAAGALPSEVAKVANALPGLKASVDANPAAGSLSSVSVST.

A signal peptide spans 1-18; it reads MEAREVEEMRRSRLLTLG. A helical membrane pass occupies residues 22 to 42; the sequence is YTAVIALAALVLVMGALGLVL.

Forms extremely stable complexes with apparent masses of 150, 50, 45 and 38 kDa. Found in a ring-shaped complex of 7 nm diameter with a 2 nm channel through the middle. Complete denaturation requires temperatures over 110 degrees Celsius.

Its subcellular location is the cell outer membrane. Functionally, the most abundant protein of the outer membrane, it forms a pore through it. The polypeptide is Major outer membrane protein 1 (ihomp1) (Ignicoccus hospitalis (strain KIN4/I / DSM 18386 / JCM 14125)).